The chain runs to 109 residues: Flagellar hook-basal body complex protein FliE (109 aa).

Belongs to the FliE family.

It is found in the bacterial flagellum basal body. This is Flagellar hook-basal body complex protein FliE from Pseudomonas paraeruginosa (strain DSM 24068 / PA7) (Pseudomonas aeruginosa (strain PA7)).